The following is a 155-amino-acid chain: SsrA-binding protein (155 aa).

The tract at residues 136–155 is disordered; the sequence is REDLKRRQDQRDIQRAMKSY.

It belongs to the SmpB family.

Its subcellular location is the cytoplasm. Functionally, required for rescue of stalled ribosomes mediated by trans-translation. Binds to transfer-messenger RNA (tmRNA), required for stable association of tmRNA with ribosomes. tmRNA and SmpB together mimic tRNA shape, replacing the anticodon stem-loop with SmpB. tmRNA is encoded by the ssrA gene; the 2 termini fold to resemble tRNA(Ala) and it encodes a 'tag peptide', a short internal open reading frame. During trans-translation Ala-aminoacylated tmRNA acts like a tRNA, entering the A-site of stalled ribosomes, displacing the stalled mRNA. The ribosome then switches to translate the ORF on the tmRNA; the nascent peptide is terminated with the 'tag peptide' encoded by the tmRNA and targeted for degradation. The ribosome is freed to recommence translation, which seems to be the essential function of trans-translation. This is SsrA-binding protein from Nostoc punctiforme (strain ATCC 29133 / PCC 73102).